Reading from the N-terminus, the 101-residue chain is Urease subunit beta (101 aa).

Belongs to the urease beta subunit family. As to quaternary structure, heterotrimer of UreA (gamma), UreB (beta) and UreC (alpha) subunits. Three heterotrimers associate to form the active enzyme.

The protein localises to the cytoplasm. The catalysed reaction is urea + 2 H2O + H(+) = hydrogencarbonate + 2 NH4(+). It functions in the pathway nitrogen metabolism; urea degradation; CO(2) and NH(3) from urea (urease route): step 1/1. The chain is Urease subunit beta from Rhizobium etli (strain ATCC 51251 / DSM 11541 / JCM 21823 / NBRC 15573 / CFN 42).